The chain runs to 586 residues: uncharacterized protein (586 aa).

The ABC transmembrane type-1 domain maps to 29 to 312; sequence YGIAIGSMVV…LARMRISLES (284 aa). Helical transmembrane passes span 30 to 50, 66 to 86, 162 to 184, and 256 to 276; these read GIAI…AWIM, VFGV…ATYV, MVIQ…ILGV, and IMET…GVLV. The ABC transporter domain maps to 346 to 580; that stretch reads IRFKDVNFSY…DGVYRRLYEL (235 aa). An ATP-binding site is contributed by 379-386; the sequence is GPSGAGKS.

This sequence belongs to the ABC transporter superfamily.

The protein localises to the cell membrane. This is an uncharacterized protein from Sinorhizobium fredii (strain NBRC 101917 / NGR234).